The sequence spans 284 residues: MYIISSKNMLLKAQRQSYAVPAFNIHNLETMQVVVETAAELRSPLILAGTPGTYSYAGTGNVVAIARDLAKKWDLPLALHLDHHEDLADITRKVQAGIRSVMIDGSHSPFEENVALVKSVVELSHRYDASVEAELGRLGGVEDDLVVDAKDALYTNPEQAREFVARTGIDSLAVAIGTAHGLYTAEPKLDFERLAAIRDCVDVPLVLHGASGLPDSDIRRAISLGVCKVNVATELKIAFSDALKAYFLENPGANDPRHYMKPAKAAMKEVVRKVIHVCGCEGQL.

Aspartate 82 functions as the Proton donor in the catalytic mechanism. Residues histidine 83 and histidine 180 each contribute to the Zn(2+) site. Position 181 (glycine 181) interacts with dihydroxyacetone phosphate. Residue histidine 208 participates in Zn(2+) binding. Dihydroxyacetone phosphate is bound by residues 209 to 211 (GAS) and 230 to 233 (NVAT).

It belongs to the class II fructose-bisphosphate aldolase family. TagBP aldolase GatY subfamily. As to quaternary structure, forms a complex with GatZ. Requires Zn(2+) as cofactor.

The enzyme catalyses D-tagatofuranose 1,6-bisphosphate = D-glyceraldehyde 3-phosphate + dihydroxyacetone phosphate. It functions in the pathway carbohydrate metabolism; D-tagatose 6-phosphate degradation; D-glyceraldehyde 3-phosphate and glycerone phosphate from D-tagatose 6-phosphate: step 2/2. Its function is as follows. Catalytic subunit of the tagatose-1,6-bisphosphate aldolase GatYZ, which catalyzes the reversible aldol condensation of dihydroxyacetone phosphate (DHAP or glycerone-phosphate) with glyceraldehyde 3-phosphate (G3P) to produce tagatose 1,6-bisphosphate (TBP). Requires GatZ subunit for full activity and stability. Is involved in the catabolism of galactitol. The chain is D-tagatose-1,6-bisphosphate aldolase subunit GatY from Klebsiella pneumoniae subsp. pneumoniae (strain ATCC 700721 / MGH 78578).